A 427-amino-acid chain; its full sequence is Glutamate-1-semialdehyde 2,1-aminomutase (427 aa).

At Lys-266 the chain carries N6-(pyridoxal phosphate)lysine.

It belongs to the class-III pyridoxal-phosphate-dependent aminotransferase family. HemL subfamily. In terms of assembly, homodimer. It depends on pyridoxal 5'-phosphate as a cofactor.

Its subcellular location is the cytoplasm. The enzyme catalyses (S)-4-amino-5-oxopentanoate = 5-aminolevulinate. It participates in porphyrin-containing compound metabolism; protoporphyrin-IX biosynthesis; 5-aminolevulinate from L-glutamyl-tRNA(Glu): step 2/2. In Aromatoleum aromaticum (strain DSM 19018 / LMG 30748 / EbN1) (Azoarcus sp. (strain EbN1)), this protein is Glutamate-1-semialdehyde 2,1-aminomutase.